A 508-amino-acid polypeptide reads, in one-letter code: Glycerol kinase (508 aa).

Position 14 (Thr-14) interacts with ADP. ATP contacts are provided by Thr-14, Thr-15, and Ser-16. A sn-glycerol 3-phosphate-binding site is contributed by Thr-14. Arg-18 provides a ligand contact to ADP. The sn-glycerol 3-phosphate site is built by Arg-84, Glu-85, and Tyr-136. Glycerol contacts are provided by Arg-84, Glu-85, and Tyr-136. Residue His-232 is modified to Phosphohistidine; by HPr. Residue Asp-246 participates in sn-glycerol 3-phosphate binding. 2 residues coordinate glycerol: Asp-246 and Gln-247. Thr-268 and Gly-311 together coordinate ADP. ATP-binding residues include Thr-268, Gly-311, Gln-315, and Gly-412. Residues Gly-412 and Asn-416 each coordinate ADP.

It belongs to the FGGY kinase family. In terms of assembly, homotetramer and homodimer (in equilibrium). The phosphoenolpyruvate-dependent sugar phosphotransferase system (PTS), including enzyme I, and histidine-containing protein (HPr) are required for the phosphorylation, which leads to the activation of the enzyme.

It catalyses the reaction glycerol + ATP = sn-glycerol 3-phosphate + ADP + H(+). Its pathway is polyol metabolism; glycerol degradation via glycerol kinase pathway; sn-glycerol 3-phosphate from glycerol: step 1/1. Activated by phosphorylation and inhibited by fructose 1,6-bisphosphate (FBP). Key enzyme in the regulation of glycerol uptake and metabolism. Catalyzes the phosphorylation of glycerol to yield sn-glycerol 3-phosphate. The chain is Glycerol kinase from Streptococcus pyogenes serotype M12 (strain MGAS2096).